The following is a 154-amino-acid chain: Prefoldin subunit 2 (154 aa).

The span at 124 to 139 (IRLMGEDEKPAAKENS) shows a compositional bias: basic and acidic residues. Positions 124–154 (IRLMGEDEKPAAKENSEGAGAKASSAGVLVS) are disordered. Residues 140-154 (EGAGAKASSAGVLVS) are compositionally biased toward low complexity.

The protein belongs to the prefoldin subunit beta family. As to quaternary structure, heterohexamer of two PFD-alpha type and four PFD-beta type subunits. Component of the PAQosome complex which is responsible for the biogenesis of several protein complexes and which consists of R2TP complex members RUVBL1, RUVBL2, RPAP3 and PIH1D1, URI complex members PFDN2, PFDN6, PDRG1, UXT and URI1 as well as ASDURF, POLR2E and DNAAF10/WDR92. Interacts with URI1; the interaction is phosphorylation-dependent and occurs in a growth-dependent manner.

It localises to the nucleus. The protein localises to the cytoplasm. The protein resides in the mitochondrion. Functionally, binds specifically to cytosolic chaperonin (c-CPN) and transfers target proteins to it. Binds to nascent polypeptide chain and promotes folding in an environment in which there are many competing pathways for nonnative proteins. The protein is Prefoldin subunit 2 (PFDN2) of Homo sapiens (Human).